A 233-amino-acid chain; its full sequence is Small ribosomal subunit protein uS3 (233 aa).

Residues 39–107 form the KH type-2 domain; that stretch reads IRTFLKRKLY…EVNINIKEER (69 aa). The interval 211-233 is disordered; the sequence is GVQPEKTEESAPAKKPRRARRGK. Residues 213 to 222 show a composition bias toward basic and acidic residues; it reads QPEKTEESAP. Residues 224-233 show a composition bias toward basic residues; it reads KKPRRARRGK.

This sequence belongs to the universal ribosomal protein uS3 family. Part of the 30S ribosomal subunit. Forms a tight complex with proteins S10 and S14.

Its function is as follows. Binds the lower part of the 30S subunit head. Binds mRNA in the 70S ribosome, positioning it for translation. The protein is Small ribosomal subunit protein uS3 of Campylobacter lari (strain RM2100 / D67 / ATCC BAA-1060).